A 360-amino-acid polypeptide reads, in one-letter code: Histidinol-phosphate aminotransferase (360 aa).

Lys211 carries the N6-(pyridoxal phosphate)lysine modification.

This sequence belongs to the class-II pyridoxal-phosphate-dependent aminotransferase family. Histidinol-phosphate aminotransferase subfamily. As to quaternary structure, homodimer. Requires pyridoxal 5'-phosphate as cofactor.

The enzyme catalyses L-histidinol phosphate + 2-oxoglutarate = 3-(imidazol-4-yl)-2-oxopropyl phosphate + L-glutamate. The protein operates within amino-acid biosynthesis; L-histidine biosynthesis; L-histidine from 5-phospho-alpha-D-ribose 1-diphosphate: step 7/9. In Sodalis glossinidius (strain morsitans), this protein is Histidinol-phosphate aminotransferase.